The primary structure comprises 472 residues: MIPRIMSTQHPDNYSIPFFASSPILEGEDEITEAFYAFSVLGADEQMWDFEGKEVDEFVVKKLLERYPTFFKNNILGKDIRLTPRVPNPSVEKEEAKLLLETLQGIARSADYARIFYGDNIAPIFEVILPMTTSVEEIERVYWLYKKAVVWISREKIYDITVREWIGDFFPEKINVIPLFETKSALIKAAKITEAYILNRKNDIEYQRVFFARSDPAMNYGLITAVTYVKRALYEVLKVEEELSIPIYPIIGVGGPPLRGGMRPDNVDAVVKEYPSVQTFTIQSSFKYDYPTKDVVKAVEKIKSTKRKLPIPVEIPPFLVNYEAEYQKQIRILAPYINSVAKRIPRRRKRKLHIGLFGYSRNVNGITLPRAITFTAALYSIGIPPELLALNSLTDSQLETISEYYINVYEDLEFAMRFFSPKVAEKVGLKELAERVKEFKPEQIPEYIEEAEIVFKGEGDVMKLAQLRGFLG.

Belongs to the PEPCase type 2 family. In terms of assembly, homotetramer. Requires Mg(2+) as cofactor.

The catalysed reaction is oxaloacetate + phosphate = phosphoenolpyruvate + hydrogencarbonate. Catalyzes the irreversible beta-carboxylation of phosphoenolpyruvate (PEP) to form oxaloacetate (OAA), a four-carbon dicarboxylic acid source for the tricarboxylic acid cycle. The chain is Phosphoenolpyruvate carboxylase from Pyrococcus furiosus (strain ATCC 43587 / DSM 3638 / JCM 8422 / Vc1).